The following is a 1653-amino-acid chain: Alpha-2-macroglobulin (1653 aa).

The N-terminal stretch at Met-1 to Gly-17 is a signal peptide. Cys-18 carries the N-palmitoyl cysteine lipid modification. A lipid anchor (S-diacylglycerol cysteine) is attached at Cys-18. A cross-link (isoglutamyl cysteine thioester (Cys-Gln)) is located at residues Cys-1187–Gln-1190. Residues Asn-1559–Lys-1589 are a coiled coil.

The protein belongs to the protease inhibitor I39 (alpha-2-macroglobulin) family. Bacterial alpha-2-macroglobulin subfamily. May form homooligomers.

It is found in the cell inner membrane. Its function is as follows. Protects the bacterial cell from host peptidases. Acts by a 'trapping' mechanism. Cleavage of the bait-region domain by host peptidases leads to a global conformational change, which results in entrapment of the host peptidase and activation of the thioester bond that covalently binds the attacking host peptidase. Trapped peptidases are still active except against very large substrates. May protect the entire periplam, including the lipoproteins anchored to the periplasmic side of the outer membrane, against intruding endopeptidases. This chain is Alpha-2-macroglobulin (yfhM), found in Escherichia coli (strain K12).